The following is a 274-amino-acid chain: MDKQLIAERFAKARNTYTREALVQQQVAGKMIRILTDVLSSAEHLLPEEIAVRFRHIVEFGCGTGSYSRILLHTLHPETLLLNDLCREMEECVGELCSTQTAGRKKDGTEIRVSFLPGDAENFDFPKGTDLITSCSTLQWFNNPETFFLRCHHALTKDGILAFSTFGTKNMHQIRCLTGHGLYYLPIEELQALLSPYFNILHAEEEIVPLSFATPQAVLKHLKQTGVTGTEKRMWTRGRLQAFCEEYIRQFSSPPTGNVTLTYHPIYIIAKNKE.

Belongs to the methyltransferase superfamily.

It carries out the reaction malonyl-[ACP] + S-adenosyl-L-methionine = malonyl-[ACP] methyl ester + S-adenosyl-L-homocysteine. It functions in the pathway cofactor biosynthesis; biotin biosynthesis. Its function is as follows. Converts the free carboxyl group of a malonyl-thioester to its methyl ester by transfer of a methyl group from S-adenosyl-L-methionine (SAM). It allows to synthesize pimeloyl-ACP via the fatty acid synthetic pathway. This is Malonyl-[acyl-carrier protein] O-methyltransferase from Bacteroides helcogenes (strain ATCC 35417 / DSM 20613 / JCM 6297 / CCUG 15421 / P 36-108).